We begin with the raw amino-acid sequence, 2371 residues long: Reducing polyketide synthase DEP5 (2371 aa).

The 431-residue stretch at 47–477 (LEPIAVVGMG…GTNAHTIIES (431 aa)) folds into the Ketosynthase family 3 (KS3) domain. Residues C221, H358, and H399 each act as for beta-ketoacyl synthase activity in the active site. A malonyl-CoA:ACP transacylase (MAT) domain region spans residues 593-905 (VFTGQGAQWA…QYLPTLIRGS (313 aa)). The active-site For malonyltransferase activity is the S685. An N-terminal hotdog fold region spans residues 982-1120 (HDVLGQLTIG…GSIRINTSNK (139 aa)). Positions 982 to 1158 (HDVLGQLTIG…FNYGPTFQDM (177 aa)) are dehydratase (DH) domain. Residues 982-1286 (HDVLGQLTIG…CTAYEAAIPQ (305 aa)) form the PKS/mFAS DH domain. H1014 acts as the Proton acceptor; for dehydratase activity in catalysis. The C-terminal hotdog fold stretch occupies residues 1132 to 1286 (PQRASGKLWN…CTAYEAAIPQ (155 aa)). D1195 functions as the Proton donor; for dehydratase activity in the catalytic mechanism. An enoyl reductase (ER) domain region spans residues 1656 to 1964 (GKVEAGKVVF…QSLSSTETVL (309 aa)). Residues 1988–2163 (ATYLLVGCLG…KHACAVVLPM (176 aa)) are ketoreductase (KR) domain. Positions 2286-2364 (SLVRDHFISK…KFAELVCAAQ (79 aa)) constitute a Carrier domain. S2323 is subject to O-(pantetheine 4'-phosphoryl)serine.

Its pathway is polyketide biosynthesis. Part of the gene cluster that mediates the biosynthesis of depudecin, a highly oxidized eleven-carbon linear polyketide that acts as a histone deacetylase (HDAC) inhibitor and makes a small contribution to pathogenesis. The reducing polyketide synthase DEP5 is the central enzyme in depudecin biosynthesis by yielding the backbone polyketide chain. The monooxygenases DEP2 and DEP4, as well as the uncharacterized protein DEP1, then act as tailoring enzymes to modify the intermediate polyketide chain into depudecin. In Fusarium langsethiae, this protein is Reducing polyketide synthase DEP5.